Here is a 568-residue protein sequence, read N- to C-terminus: Nitrite reductase (568 aa).

An N-terminal signal peptide occupies residues 1-25 (MPFGKPLVGTLLASLTLLGLATAHA). An N-terminal tail region spans residues 26–54 (KDDMKAAEQYQGAASAVDPAHVVRTNGAP). Residues 55-140 (DMSESEFNEA…AKYIQHTPPQ (86 aa)) enclose the Cytochrome c domain. Residues Cys-72, Cys-75, His-76, Arg-96, Thr-109, and Met-113 each contribute to the heme c site. The segment at 141–568 (PPEWGMPEMR…NVYNTQHDVY (428 aa)) is D1-heme domain. Heme d1 is bound by residues His-207, Arg-250, Ser-251, Tyr-270, Arg-397, and Gln-508.

Homodimer. It depends on heme c as a cofactor. Requires heme as cofactor.

It localises to the periplasm. It carries out the reaction nitric oxide + Fe(III)-[cytochrome c] + H2O = Fe(II)-[cytochrome c] + nitrite + 2 H(+). The catalysed reaction is A + NH4(+) + H2O = hydroxylamine + AH2 + H(+). The chain is Nitrite reductase (nirS) from Pseudomonas aeruginosa (strain ATCC 15692 / DSM 22644 / CIP 104116 / JCM 14847 / LMG 12228 / 1C / PRS 101 / PAO1).